The following is a 57-amino-acid chain: Phylloseptin-Az4 (57 aa).

Residues 1 to 13 (LVLFLGLVSLSIC) form the signal peptide. The propeptide occupies 14–35 (EEEKRETEEEENDQEEDDKSEE). The interval 16–35 (EKRETEEEENDQEEDDKSEE) is disordered. Residues 21–32 (EEEENDQEEDDK) are compositionally biased toward acidic residues. A Leucine amide modification is found at Leu56.

In terms of tissue distribution, expressed by the skin glands.

Its subcellular location is the secreted. In terms of biological role, has antibacterial activity against the Gram-positive bacterium M.luteus ATCC 49732 (MIC=1.3 uM). Does not inhibit the growth of the fungus C.albicans. This Pithecopus azureus (Orange-legged monkey tree frog) protein is Phylloseptin-Az4 (psn12).